The chain runs to 598 residues: Nuclear receptor subfamily 4 group A member 2 (598 aa).

A disordered region spans residues 1–22 (MPCVQAQYGSSPQGASPASQSY). The span at 8–22 (YGSSPQGASPASQSY) shows a compositional bias: low complexity. A DNA-binding region (nuclear receptor) is located at residues 260–335 (EGLCAVCGDN…VGMVKEVVRT (76 aa)). 2 consecutive NR C4-type zinc fingers follow at residues 263 to 283 (CAVC…CEGC) and 299 to 323 (CLAN…FQKC). The Bipartite nuclear localization signal (NLS1) motif lies at 287–314 (FKRTVQKNAKYVCLANKNCPVDKRRRNR). The disordered stretch occupies residues 337 to 361 (SLKGRRGRLPSKPKSPQDPSPPSPP). The Nuclear localization signal (NLS1) signature appears at 338–350 (LKGRRGRLPSKPK). The segment covering 352-361 (PQDPSPPSPP) has biased composition (pro residues). In terms of domain architecture, NR LBD spans 360 to 595 (PPVSLISALV…AIIDKLFLDT (236 aa)). The nuclear export sequence (NES1) signature appears at 443-452 (FLELFVLRLA). Positions 568 to 577 (QGLQRIFYLK) match the nuclear export sequence (NES2) motif.

Belongs to the nuclear hormone receptor family. NR4 subfamily. Interacts with SFPQ, NCOR2, SIN3A and HADC1. The interaction with NCOR2 increases in the absence of PITX3. Interacts with PER2. Brain.

It localises to the cytoplasm. The protein resides in the nucleus. Its function is as follows. Transcriptional regulator which is important for the differentiation and maintenance of meso-diencephalic dopaminergic (mdDA) neurons during development. It is crucial for expression of a set of genes such as SLC6A3, SLC18A2, TH and DRD2 which are essential for development of mdDA neurons. This is Nuclear receptor subfamily 4 group A member 2 (Nr4a2) from Mus musculus (Mouse).